Reading from the N-terminus, the 70-residue chain is Probable tautomerase RSp0893 (70 aa).

The active-site Proton acceptor; via imino nitrogen is Pro-2.

It belongs to the 4-oxalocrotonate tautomerase family.

The chain is Probable tautomerase RSp0893 from Ralstonia nicotianae (strain ATCC BAA-1114 / GMI1000) (Ralstonia solanacearum).